We begin with the raw amino-acid sequence, 598 residues long: Aspartate--tRNA ligase (598 aa).

L-aspartate is bound at residue glutamate 173. The tract at residues 197 to 200 is aspartate; it reads QLFK. Arginine 219 serves as a coordination point for L-aspartate. ATP-binding positions include 219-221 and glutamine 228; that span reads RDE. Histidine 449 lines the L-aspartate pocket. An ATP-binding site is contributed by glutamate 483. Residue arginine 490 participates in L-aspartate binding. 535 to 538 is a binding site for ATP; sequence GLDR.

This sequence belongs to the class-II aminoacyl-tRNA synthetase family. Type 1 subfamily. As to quaternary structure, homodimer.

Its subcellular location is the cytoplasm. The enzyme catalyses tRNA(Asp) + L-aspartate + ATP = L-aspartyl-tRNA(Asp) + AMP + diphosphate. Catalyzes the attachment of L-aspartate to tRNA(Asp) in a two-step reaction: L-aspartate is first activated by ATP to form Asp-AMP and then transferred to the acceptor end of tRNA(Asp). This Shewanella halifaxensis (strain HAW-EB4) protein is Aspartate--tRNA ligase.